We begin with the raw amino-acid sequence, 166 residues long: Interleukin-3 (166 aa).

An N-terminal signal peptide occupies residues 1–27 (MVLASSTTSILCMLLPLLMLFHQGLQI). Cystine bridges form between Cys43/Cys106 and Cys105/Cys166. Residues Asn60 and Asn70 are each glycosylated (N-linked (GlcNAc...) asparagine). Positions 145 to 166 (SVSRPPQPTSSSDNFRPMTVEC) are disordered.

The protein belongs to the IL-3 family. As to quaternary structure, monomer. As to expression, activated T-cells, mast cells, natural killer cells.

The protein localises to the secreted. Cytokine secreted predominantly by activated T-lymphocytes as well as mast cells and osteoblastic cells that controls the production and differentiation of hematopoietic progenitor cells into lineage-restricted cells. Also stimulates mature basophils, eosinophils, and monocytes to become functionally activated. In addition, plays an important role in neural cell proliferation and survival. Participates as well in bone homeostasis and inhibits osteoclast differentiation by preventing NF-kappa-B nuclear translocation and activation. Mechanistically, exerts its biological effects through a receptor composed of IL3RA subunit and a signal transducing subunit IL3RB. Receptor stimulation results in the rapid activation of JAK2 kinase activity leading to STAT5-mediated transcriptional program. Alternatively, contributes to cell survival under oxidative stress in non-hematopoietic systems by activating pathways mediated by PI3K/AKT and ERK. This chain is Interleukin-3 (Il3), found in Rattus norvegicus (Rat).